The sequence spans 39 residues: Cytochrome b6-f complex subunit 5 (39 aa).

The chain crosses the membrane as a helical span at residues 5-25 (LLCGIVLGLVPVTLLGLFVSA).

The protein belongs to the PetG family. As to quaternary structure, the 4 large subunits of the cytochrome b6-f complex are cytochrome b6, subunit IV (17 kDa polypeptide, PetD), cytochrome f and the Rieske protein, while the 4 small subunits are PetG, PetL, PetM and PetN. The complex functions as a dimer.

It is found in the cellular thylakoid membrane. Functionally, component of the cytochrome b6-f complex, which mediates electron transfer between photosystem II (PSII) and photosystem I (PSI), cyclic electron flow around PSI, and state transitions. PetG is required for either the stability or assembly of the cytochrome b6-f complex. In Prochlorococcus marinus (strain NATL1A), this protein is Cytochrome b6-f complex subunit 5.